The sequence spans 310 residues: Methionyl-tRNA formyltransferase (310 aa).

Residue 109-112 coordinates (6S)-5,6,7,8-tetrahydrofolate; sequence SLLP.

The protein belongs to the Fmt family.

It carries out the reaction L-methionyl-tRNA(fMet) + (6R)-10-formyltetrahydrofolate = N-formyl-L-methionyl-tRNA(fMet) + (6S)-5,6,7,8-tetrahydrofolate + H(+). Functionally, attaches a formyl group to the free amino group of methionyl-tRNA(fMet). The formyl group appears to play a dual role in the initiator identity of N-formylmethionyl-tRNA by promoting its recognition by IF2 and preventing the misappropriation of this tRNA by the elongation apparatus. The chain is Methionyl-tRNA formyltransferase from Staphylococcus epidermidis (strain ATCC 12228 / FDA PCI 1200).